The primary structure comprises 88 residues: UPF0298 protein BA_4142/GBAA_4142/BAS3844 (88 aa).

This sequence belongs to the UPF0298 family.

The protein resides in the cytoplasm. The protein is UPF0298 protein BA_4142/GBAA_4142/BAS3844 of Bacillus anthracis.